The chain runs to 383 residues: Putative 8-amino-7-oxononanoate synthase (383 aa).

Position 22 (Arg-22) interacts with substrate. 109–110 (GY) is a pyridoxal 5'-phosphate binding site. Residue His-134 coordinates substrate. Residues Ser-182, 207–210 (DDAH), and 236–239 (TLSK) contribute to the pyridoxal 5'-phosphate site. Lys-239 is subject to N6-(pyridoxal phosphate)lysine. Thr-348 is a substrate binding site.

It belongs to the class-II pyridoxal-phosphate-dependent aminotransferase family. BioF subfamily. In terms of assembly, homodimer. Requires pyridoxal 5'-phosphate as cofactor.

It carries out the reaction 6-carboxyhexanoyl-[ACP] + L-alanine + H(+) = (8S)-8-amino-7-oxononanoate + holo-[ACP] + CO2. It participates in cofactor biosynthesis; biotin biosynthesis. Functionally, catalyzes the decarboxylative condensation of pimeloyl-[acyl-carrier protein] and L-alanine to produce 8-amino-7-oxononanoate (AON), [acyl-carrier protein], and carbon dioxide. In Caulobacter sp. (strain K31), this protein is Putative 8-amino-7-oxononanoate synthase (bioF).